A 165-amino-acid polypeptide reads, in one-letter code: Ubiquitin-conjugating enzyme E2 G2 (165 aa).

The residue at position 2 (Ala2) is an N-acetylalanine. The UBC core domain occupies 4–164 (TALKRLMAEY…AKQIVQKSLG (161 aa)). The Glycyl thioester intermediate role is filled by Cys89.

The protein belongs to the ubiquitin-conjugating enzyme family. Interacts with AUP1 (via C-terminus); the interaction recruits UBE2G2 to lipid droplets. Interacts with ubiquitin ligases AMFR/gp78 and RNF139/TRC8; recruitment to lipid droplets by AUP1 facilitates interaction of UBE2G2 with AMFR and RNF139, leading to sterol-induced ubiquitination of 3-hydroxy-3-methylglutaryl coenzyme A reductase and its subsequent proteasomal degradation.

It localises to the endoplasmic reticulum. Its subcellular location is the lipid droplet. It carries out the reaction S-ubiquitinyl-[E1 ubiquitin-activating enzyme]-L-cysteine + [E2 ubiquitin-conjugating enzyme]-L-cysteine = [E1 ubiquitin-activating enzyme]-L-cysteine + S-ubiquitinyl-[E2 ubiquitin-conjugating enzyme]-L-cysteine.. Its pathway is protein modification; protein ubiquitination. Functionally, accepts ubiquitin from the E1 complex and catalyzes its covalent attachment to other proteins. In vitro catalyzes 'Lys-48'-linked polyubiquitination. Involved in endoplasmic reticulum-associated degradation (ERAD). Required for sterol-induced ubiquitination of 3-hydroxy-3-methylglutaryl coenzyme A reductase and its subsequent proteasomal degradation. The polypeptide is Ubiquitin-conjugating enzyme E2 G2 (Homo sapiens (Human)).